A 220-amino-acid polypeptide reads, in one-letter code: Small ribosomal subunit protein uS3 (220 aa).

The region spanning 38–106 (IRNFINKKLQ…QVHINIVEIK (69 aa)) is the KH type-2 domain.

The protein belongs to the universal ribosomal protein uS3 family. Part of the 30S ribosomal subunit. Forms a tight complex with proteins S10 and S14.

Functionally, binds the lower part of the 30S subunit head. Binds mRNA in the 70S ribosome, positioning it for translation. The polypeptide is Small ribosomal subunit protein uS3 (Lacticaseibacillus paracasei (strain ATCC 334 / BCRC 17002 / CCUG 31169 / CIP 107868 / KCTC 3260 / NRRL B-441) (Lactobacillus paracasei)).